An 82-amino-acid chain; its full sequence is Large ribosomal subunit protein bL27 (82 aa).

The disordered stretch occupies residues 1–26 (MAHKKGQGASRNGRDSESKRLGMKVG).

It belongs to the bacterial ribosomal protein bL27 family.

This chain is Large ribosomal subunit protein bL27, found in Chlamydia felis (strain Fe/C-56) (Chlamydophila felis).